Reading from the N-terminus, the 306-residue chain is Probable cobalamin biosynthesis protein CobD (306 aa).

The next 6 membrane-spanning stretches (helical) occupy residues 17-37, 54-74, 88-108, 155-175, 207-227, and 286-306; these read IGEP…IIFF, LFGF…AYEI, ISLY…IEFS, ITDS…PGAF, ILNF…APFY, and SLKA…VLLM.

This sequence belongs to the CobD/CbiB family.

It is found in the cell membrane. Its pathway is cofactor biosynthesis; adenosylcobalamin biosynthesis. Functionally, converts cobyric acid to cobinamide by the addition of aminopropanol on the F carboxylic group. The protein is Probable cobalamin biosynthesis protein CobD of Methanococcus maripaludis (strain C5 / ATCC BAA-1333).